The following is a 394-amino-acid chain: Fructose-bisphosphate aldolase, chloroplastic (394 aa).

Residues 1 to 46 (MASASLLKTSPVLDNPEFLKGQTLRIPSVAGVRFTPSGSSSLTVRA) constitute a chloroplast transit peptide. Substrate contacts are provided by Arg93 and Lys183. Catalysis depends on Glu223, which acts as the Proton acceptor. The Schiff-base intermediate with dihydroxyacetone-P role is filled by Lys265.

The protein belongs to the class I fructose-bisphosphate aldolase family.

The protein resides in the plastid. It localises to the chloroplast. The enzyme catalyses beta-D-fructose 1,6-bisphosphate = D-glyceraldehyde 3-phosphate + dihydroxyacetone phosphate. It participates in carbohydrate degradation; glycolysis; D-glyceraldehyde 3-phosphate and glycerone phosphate from D-glucose: step 4/4. The protein is Fructose-bisphosphate aldolase, chloroplastic of Spinacia oleracea (Spinach).